We begin with the raw amino-acid sequence, 454 residues long: Kynurenine 3-monooxygenase (454 aa).

The protein belongs to the aromatic-ring hydroxylase family. KMO subfamily. It depends on FAD as a cofactor.

The enzyme catalyses L-kynurenine + NADPH + O2 + H(+) = 3-hydroxy-L-kynurenine + NADP(+) + H2O. It participates in cofactor biosynthesis; NAD(+) biosynthesis; quinolinate from L-kynurenine: step 1/3. Functionally, catalyzes the hydroxylation of L-kynurenine (L-Kyn) to form 3-hydroxy-L-kynurenine (L-3OHKyn). Required for synthesis of quinolinic acid. The polypeptide is Kynurenine 3-monooxygenase (Salinispora arenicola (strain CNS-205)).